Consider the following 218-residue polypeptide: Response regulator UvrY (218 aa).

The Response regulatory domain occupies 3-119; the sequence is NVLLVDDHEL…EVVSAIRSVY (117 aa). 4-aspartylphosphate is present on aspartate 54. Residues 143-208 enclose the HTH luxR-type domain; sequence TESPFASLSE…ELTHLAIRHG (66 aa). Residues 167–186 constitute a DNA-binding region (H-T-H motif); that stretch reads VNEISEQLNLSPKTVNSYRY.

Post-translationally, phosphorylated and activated by BarA.

Its subcellular location is the cytoplasm. Its function is as follows. Member of the two-component regulatory system UvrY/BarA involved in the regulation of carbon metabolism via the CsrA/CsrB regulatory system. UvrY activates the transcription of the untranslated csrB RNA and of barA, in an autoregulatory loop. Mediates the effects of CsrA on csrB RNA by BarA-dependent and BarA-independent mechanisms. In Escherichia coli O157:H7, this protein is Response regulator UvrY (uvrY).